Here is a 228-residue protein sequence, read N- to C-terminus: Prophenin-2 (228 aa).

The signal sequence occupies residues 1-29 (METQRASLCLGRWSLWLLLLALVVPSASA). Positions 30–146 (QALSYREAVL…FLRRPRLRRQ (117 aa)) are excised as a propeptide. 2 cysteine pairs are disulfide-bonded: C85/C96 and C107/C124. A run of 7 repeats spans residues 148–157 (FPPPNVPGPR), 158–167 (FPPPNVPGPR), 168–177 (FPPPNFPGPR), 178–187 (FPPPNFPGPR), 188–197 (FPPPNFPGPP), 198–207 (FPPPIFPGPW), and 208–217 (FPPPPPFRPP). The 7 X 10 AA tandem repeats stretch occupies residues 148 to 217 (FPPPNVPGPR…FPPPPPFRPP (70 aa)). Disordered stretches follow at residues 167–195 (RFPP…NFPG) and 207–228 (WFPP…PGRR). Residue P225 is modified to Proline amide. The propeptide at 226 to 228 (GRR) is removed in mature form.

It belongs to the cathelicidin family.

It localises to the secreted. In terms of biological role, exerts antimicrobial activity. It is more effective against Gram-negative bacteria than Gram-positive bacteria. The protein is Prophenin-2 of Sus scrofa (Pig).